Reading from the N-terminus, the 199-residue chain is MANRGPSYGLSREVQQKIEKQYDPDLEQILIQWITTQCRKGVSQPQPGRENFQNWLKDGTVLCELINSLYPEGQAPVKKIQASTMAFKQMEQISQFLQAAERYGINTTDIFQTVDLWEGKNMACVQRTLMNLGGLAVARDDGLFSGDPNWFPKKSKENPRNFSDNQLQEGKNVIGLQMGTNRGASQAGMTGYGMPRQIL.

N-acetylalanine is present on Ala-2. Residue Ser-11 is modified to Phosphoserine. An N6-acetyllysine mark is found at Lys-17 and Lys-20. The Calponin-homology (CH) domain maps to 24–136 (PDLEQILIQW…RTLMNLGGLA (113 aa)). The residue at position 163 (Ser-163) is a Phosphoserine. A Glycyl lysine isopeptide (Lys-Gly) (interchain with G-Cter in SUMO2) cross-link involves residue Lys-171. Residues 174–199 (IGLQMGTNRGASQAGMTGYGMPRQIL) form a Calponin-like repeat. The residue at position 180 (Thr-180) is a Phosphothreonine. Omega-N-methylarginine occurs at positions 182 and 196.

Belongs to the calponin family.

In Rattus norvegicus (Rat), this protein is Transgelin-2 (Tagln2).